Consider the following 155-residue polypeptide: Aspartate carbamoyltransferase regulatory chain (155 aa).

Residues Cys111, Cys116, Cys137, and Cys140 each coordinate Zn(2+).

The protein belongs to the PyrI family. As to quaternary structure, contains catalytic and regulatory chains. It depends on Zn(2+) as a cofactor.

Functionally, involved in allosteric regulation of aspartate carbamoyltransferase. In Haloarcula marismortui (strain ATCC 43049 / DSM 3752 / JCM 8966 / VKM B-1809) (Halobacterium marismortui), this protein is Aspartate carbamoyltransferase regulatory chain.